The primary structure comprises 310 residues: MTNLPLRHSAEVAAAKAAGRPIVALESTIITHGMPYPQNLEVARQVEDDLRAAGVTPATIAVMDGTLHIGLEAHQLEALAQAKGVAKLSRADIAACMATGGTGATTVSATMIAAHLAGISVFATGGIGGVHRGAESSFDVSADLLELAQTPVTVVAAGAKAILDVAKTLEVLETQGVPVITVGQDSFPAFWSAESVFKSPLRMDDPVGIAAAHQMRVDLGLPGGQLVANPIPHTDEIPATELAPIIATAQADAEKHGIKGKAVTPYLLQRIYELTQGRSLTANIALVRNNARLAGAIAQALIANARIAGK.

Glutamate 26 (proton donor) is an active-site residue. The substrate site is built by lysine 87 and valine 107. Residue aspartate 139 coordinates Mn(2+). A substrate-binding site is contributed by 141-143 (SAD). Residue lysine 160 is the Nucleophile of the active site.

Belongs to the pseudouridine-5'-phosphate glycosidase family. In terms of assembly, homotrimer. The cofactor is Mn(2+).

The enzyme catalyses D-ribose 5-phosphate + uracil = psi-UMP + H2O. Functionally, catalyzes the reversible cleavage of pseudouridine 5'-phosphate (PsiMP) to ribose 5-phosphate and uracil. Functions biologically in the cleavage direction, as part of a pseudouridine degradation pathway. This is Pseudouridine-5'-phosphate glycosidase from Roseobacter denitrificans (strain ATCC 33942 / OCh 114) (Erythrobacter sp. (strain OCh 114)).